A 430-amino-acid chain; its full sequence is Dihydroorotase (430 aa).

His60 and His62 together coordinate Zn(2+). Substrate is bound by residues 62 to 64 (HLR) and Asn94. 4 residues coordinate Zn(2+): Asp152, His179, His232, and Asp305. Residue Asp305 is part of the active site. Substrate is bound by residues His309 and 323 to 324 (FG).

This sequence belongs to the metallo-dependent hydrolases superfamily. DHOase family. Class I DHOase subfamily. The cofactor is Zn(2+).

It carries out the reaction (S)-dihydroorotate + H2O = N-carbamoyl-L-aspartate + H(+). It participates in pyrimidine metabolism; UMP biosynthesis via de novo pathway; (S)-dihydroorotate from bicarbonate: step 3/3. Functionally, catalyzes the reversible cyclization of carbamoyl aspartate to dihydroorotate. The sequence is that of Dihydroorotase from Solibacter usitatus (strain Ellin6076).